Reading from the N-terminus, the 587-residue chain is 5-aminolevulinate synthase, erythroid-specific, mitochondrial (587 aa).

The transit peptide at Met1–Ser49 directs the protein to the mitochondrion. Arg163 is a binding site for succinyl-CoA. The pyridoxal 5'-phosphate site is built by Cys258 and Phe259. Residues Ser280 and Lys299 each coordinate succinyl-CoA. Pyridoxal 5'-phosphate contacts are provided by Ser332, His360, and Thr388. Residue Lys391 is part of the active site. Lys391 bears the N6-(pyridoxal phosphate)lysine mark. Residues Thr420 and Thr421 each contribute to the pyridoxal 5'-phosphate site. A succinyl-CoA-binding site is contributed by Thr508.

This sequence belongs to the class-II pyridoxal-phosphate-dependent aminotransferase family. In terms of assembly, homodimer. Interacts with SUCLA2. As to quaternary structure, interacts with SUCLA2. Pyridoxal 5'-phosphate serves as cofactor. Erythroid-specific.

It is found in the mitochondrion inner membrane. The catalysed reaction is succinyl-CoA + glycine + H(+) = 5-aminolevulinate + CO2 + CoA. It participates in porphyrin-containing compound metabolism; protoporphyrin-IX biosynthesis; 5-aminolevulinate from glycine: step 1/1. Down-regulated by itaconyl-CoA which acts as a competitive inhibitor of succinyl-CoA substrate. Catalyzes the pyridoxal 5'-phosphate (PLP)-dependent condensation of succinyl-CoA and glycine to form aminolevulinic acid (ALA), with CoA and CO2 as by-products. Contributes significantly to heme formation during erythropoiesis. In terms of biological role, catalyzes the pyridoxal 5'-phosphate (PLP)-dependent condensation of succinyl-CoA and glycine to form aminolevulinic acid (ALA), with CoA and CO2 as by-products. Catalytic activity is 75-85% of isoform 1 activity. Functionally, catalyzes the pyridoxal 5'-phosphate (PLP)-dependent condensation of succinyl-CoA and glycine to form aminolevulinic acid (ALA), with CoA and CO2 as by-products. Catalytic activity is 65-75% of isoform 1 activity. In Homo sapiens (Human), this protein is 5-aminolevulinate synthase, erythroid-specific, mitochondrial.